A 216-amino-acid polypeptide reads, in one-letter code: Adenylate kinase (216 aa).

ATP is bound at residue 11–16 (GSGKGT). The NMP stretch occupies residues 31 to 60 (ATGDLFRKAIERGDELGDTVKSYMERGELV). AMP is bound by residues Thr-32, Arg-37, 58–60 (ELV), 86–89 (GFPR), and Gln-93. Positions 127–163 (GRWVCRSCQSPYQCGCAEVAEGKCSRCQGELYQRPDD) are LID. ATP is bound at residue Arg-128. 4 residues coordinate Zn(2+): Cys-131, Cys-134, Cys-150, and Cys-153. Positions 160 and 171 each coordinate AMP. Ala-199 provides a ligand contact to ATP.

Belongs to the adenylate kinase family. In terms of assembly, monomer.

The protein resides in the cytoplasm. The enzyme catalyses AMP + ATP = 2 ADP. Its pathway is purine metabolism; AMP biosynthesis via salvage pathway; AMP from ADP: step 1/1. In terms of biological role, catalyzes the reversible transfer of the terminal phosphate group between ATP and AMP. Plays an important role in cellular energy homeostasis and in adenine nucleotide metabolism. In Dehalococcoides mccartyi (strain ATCC BAA-2266 / KCTC 15142 / 195) (Dehalococcoides ethenogenes (strain 195)), this protein is Adenylate kinase.